Here is a 94-residue protein sequence, read N- to C-terminus: ESAT-6-like protein EsxL (94 aa).

Belongs to the WXG100 family. ESAT-6 subfamily. In terms of assembly, strongly interacts with EsxK to form a heterodimeric complex under reducing conditions.

Its subcellular location is the secreted. This chain is ESAT-6-like protein EsxL, found in Mycobacterium bovis (strain ATCC BAA-935 / AF2122/97).